The chain runs to 476 residues: MAIKVRLAPSPTGKLHIGTARTALFNWLFARKNNGSFLIRIEDTDKERSQEEYKENILEGLDWLGLTWDAEPIIQSNRIEQHREAIKYLLEKGLAYRCFTTEEELAAMREEQKSRNKPPRYDNRHRSLSTEEESNFLSEGRTAVIRFRIDDNESIQWNDLVRGPMNWTGKDLGGDMVIARRAPANEIGDPLYNLVVVIDDGYMGITHVIRGEDHIANTAKQILLYKALGLTLPKFAHTPLILNAEGKKLSKRDGVTSISDFKEMGYTSKAMSNYMTLLGWSIPDGMDEKFTIEESSKVFDFDRVNKAGAKFDWEKLKWLNSQTIHDSSSEEILKAVEPLFNKEGWDLPNLEWSLKLIELIKPSMTLLTDSVEQSRFFFEDPLLNQDAINQLEIEGAKDSLKILLKQIDTSKINKLTVEHAKKLINDAAVFGGFKKGLIMKSLRAALLGCLQGPDVINSWILLSEINQDKSRIERCL.

Residues Pro-9–Thr-19 carry the 'HIGH' region motif. The span at Arg-109–Ser-129 shows a compositional bias: basic and acidic residues. Residues Arg-109 to Glu-133 form a disordered region. The 'KMSKS' region motif lies at Lys-248–Arg-252. Lys-251 contributes to the ATP binding site.

This sequence belongs to the class-I aminoacyl-tRNA synthetase family. Glutamate--tRNA ligase type 1 subfamily. In terms of assembly, monomer.

The protein resides in the cytoplasm. The enzyme catalyses tRNA(Glu) + L-glutamate + ATP = L-glutamyl-tRNA(Glu) + AMP + diphosphate. Catalyzes the attachment of glutamate to tRNA(Glu) in a two-step reaction: glutamate is first activated by ATP to form Glu-AMP and then transferred to the acceptor end of tRNA(Glu). This is Glutamate--tRNA ligase from Prochlorococcus marinus (strain MIT 9211).